A 283-amino-acid polypeptide reads, in one-letter code: Pantothenate synthetase (283 aa).

31 to 38 (MGALHDGH) is a binding site for ATP. The active-site Proton donor is His-38. Gln-62 contacts (R)-pantoate. Gln-62 contributes to the beta-alanine binding site. 148–151 (GKKD) serves as a coordination point for ATP. Position 154 (Gln-154) interacts with (R)-pantoate. Residues Val-177 and 185–188 (KSSR) contribute to the ATP site.

It belongs to the pantothenate synthetase family. In terms of assembly, homodimer.

Its subcellular location is the cytoplasm. The catalysed reaction is (R)-pantoate + beta-alanine + ATP = (R)-pantothenate + AMP + diphosphate + H(+). The protein operates within cofactor biosynthesis; (R)-pantothenate biosynthesis; (R)-pantothenate from (R)-pantoate and beta-alanine: step 1/1. Catalyzes the condensation of pantoate with beta-alanine in an ATP-dependent reaction via a pantoyl-adenylate intermediate. The sequence is that of Pantothenate synthetase from Staphylococcus aureus (strain MRSA252).